The chain runs to 283 residues: S-adenosylmethionine mitochondrial carrier protein homolog (283 aa).

Solcar repeat units lie at residues leucine 11 to phenylalanine 84, aspartate 93 to glutamine 178, and serine 187 to isoleucine 275. Transmembrane regions (helical) follow at residues phenylalanine 14–isoleucine 34, glycine 55–phenylalanine 75, methionine 99–alanine 119, arginine 152–tryptophan 172, phenylalanine 190–leucine 210, and phenylalanine 248–phenylalanine 268.

It belongs to the mitochondrial carrier (TC 2.A.29) family.

It is found in the mitochondrion inner membrane. In terms of biological role, mitochondrial solute carriers shuttle metabolites, nucleotides, and cofactors through the mitochondrial inner membrane. May mediate the transport of S-adenosylmethionine (SAM) into the mitochondria. The chain is S-adenosylmethionine mitochondrial carrier protein homolog from Drosophila melanogaster (Fruit fly).